A 75-amino-acid polypeptide reads, in one-letter code: MRVLDLILALITAAVVGYTIALVSNSGCYVHFDGRSATTTCPPGPWVESIANGLYTAGLARPHPEPECERRQSSW.

Residues M1 to R2 are Lumenal-facing. The helical transmembrane segment at V3 to V23 threads the bilayer. The Cytoplasmic segment spans residues S24–W75.

Belongs to the Tymovirales TGBp3 protein family.

It is found in the host endoplasmic reticulum membrane. Plays a role in viral cell-to-cell propagation, by facilitating genome transport to neighboring plant cells through plasmosdesmata. May induce the formation of granular vesicles derived from the Endoplasmic reticulum, which align on actin filaments. The polypeptide is Movement protein TGBp3 (Strawberry mild yellow edge-associated virus (SMYEaV)).